Here is a 266-residue protein sequence, read N- to C-terminus: 4-hydroxy-tetrahydrodipicolinate reductase (266 aa).

Gly10–Met15 serves as a coordination point for NAD(+). Lys38 is an NADP(+) binding site. NAD(+) is bound by residues Gly99–Thr101 and Ala125–Phe128. His155 serves as the catalytic Proton donor/acceptor. His156 contacts (S)-2,3,4,5-tetrahydrodipicolinate. The active-site Proton donor is Lys159. A (S)-2,3,4,5-tetrahydrodipicolinate-binding site is contributed by Gly165–Thr166.

The protein belongs to the DapB family.

The protein resides in the cytoplasm. The catalysed reaction is (S)-2,3,4,5-tetrahydrodipicolinate + NAD(+) + H2O = (2S,4S)-4-hydroxy-2,3,4,5-tetrahydrodipicolinate + NADH + H(+). It carries out the reaction (S)-2,3,4,5-tetrahydrodipicolinate + NADP(+) + H2O = (2S,4S)-4-hydroxy-2,3,4,5-tetrahydrodipicolinate + NADPH + H(+). The protein operates within amino-acid biosynthesis; L-lysine biosynthesis via DAP pathway; (S)-tetrahydrodipicolinate from L-aspartate: step 4/4. Catalyzes the conversion of 4-hydroxy-tetrahydrodipicolinate (HTPA) to tetrahydrodipicolinate. This is 4-hydroxy-tetrahydrodipicolinate reductase from Bacillus cytotoxicus (strain DSM 22905 / CIP 110041 / 391-98 / NVH 391-98).